The sequence spans 103 residues: Large ribosomal subunit protein uL24 (103 aa).

Belongs to the universal ribosomal protein uL24 family. As to quaternary structure, part of the 50S ribosomal subunit.

One of two assembly initiator proteins, it binds directly to the 5'-end of the 23S rRNA, where it nucleates assembly of the 50S subunit. Its function is as follows. One of the proteins that surrounds the polypeptide exit tunnel on the outside of the subunit. The chain is Large ribosomal subunit protein uL24 from Haemophilus influenzae (strain ATCC 51907 / DSM 11121 / KW20 / Rd).